The chain runs to 144 residues: Arginine decarboxylase proenzyme (144 aa).

S80 functions as the Schiff-base intermediate with substrate; via pyruvic acid in the catalytic mechanism. Position 80 is a pyruvic acid (Ser); by autocatalysis (S80). Residue H85 is the Proton acceptor; for processing activity of the active site. C100 serves as the catalytic Proton donor; for catalytic activity.

It belongs to the prokaryotic AdoMetDC family. Type 1 subfamily. As to quaternary structure, heterooctamer of four alpha and four beta chains arranged as a tetramer of alpha/beta heterodimers. Pyruvate is required as a cofactor. In terms of processing, is synthesized initially as an inactive proenzyme. Formation of the active enzyme involves a self-maturation process in which the active site pyruvoyl group is generated from an internal serine residue via an autocatalytic post-translational modification. Two non-identical subunits are generated from the proenzyme in this reaction, and the pyruvate is formed at the N-terminus of the alpha chain, which is derived from the carboxyl end of the proenzyme. The post-translation cleavage follows an unusual pathway, termed non-hydrolytic serinolysis, in which the side chain hydroxyl group of the serine supplies its oxygen atom to form the C-terminus of the beta chain, while the remainder of the serine residue undergoes an oxidative deamination to produce ammonia and the pyruvoyl group blocking the N-terminus of the alpha chain.

The catalysed reaction is L-arginine + H(+) = agmatine + CO2. It functions in the pathway amine and polyamine biosynthesis; agmatine biosynthesis; agmatine from L-arginine: step 1/1. Functionally, specifically catalyzes the decarboxylation of L-arginine to agmatine. Has no S-adenosylmethionine decarboxylase (AdoMetDC) activity. This Ignicoccus hospitalis (strain KIN4/I / DSM 18386 / JCM 14125) protein is Arginine decarboxylase proenzyme.